The sequence spans 346 residues: MSRRVRRGGLRVAVPKQETPVSKFLTASGTFQDDDIKLNHTGLRVVSSEPNLPTQTQSSSPDGQLSIADLELVRFLGKGAGGTVQLVRHKWTNVNYALKAIQMNINETVRKQIVQELKINQVTHQQCPYIVECFHSFYHNGVISMILEYMDRGSLSDIIKQQKQIPEPYLAVIASQVLKGLEYLHQVRHIIHRDIKPSNLLINHKGEVKISDFGVSAVLVHSLAQRDTFVGTCTYMSPERLQGRSYAYDSDLWSLGLTLLECALGTFPYKPAGMEEGWQNFFILMECIVNQPPAAASPDKFSPEFCSFIESCIRKCPSERPSTTDLLKHPFLQKYNEEEYHLSKIL.

The Protein kinase domain maps to 70–332; that stretch reads LELVRFLGKG…TTDLLKHPFL (263 aa). Residues 76–84 and lysine 99 contribute to the ATP site; that span reads LGKGAGGTV. Aspartate 194 serves as the catalytic Proton acceptor.

This sequence belongs to the protein kinase superfamily. STE Ser/Thr protein kinase family. MAP kinase kinase subfamily.

The catalysed reaction is L-seryl-[protein] + ATP = O-phospho-L-seryl-[protein] + ADP + H(+). It carries out the reaction L-threonyl-[protein] + ATP = O-phospho-L-threonyl-[protein] + ADP + H(+). It catalyses the reaction L-tyrosyl-[protein] + ATP = O-phospho-L-tyrosyl-[protein] + ADP + H(+). Functionally, the CERK1, MEKK1a/b, MKK1a/b/c and MPK4a/b proteins are involved in pathogen defense. The pathway induces rapid growth inhibition, cell wall depositions and accumulation of defense-related transcripts. This protein is required for full defense response to fungal pathogen chitin. The protein is Mitogen-activated protein kinase kinase 1c of Physcomitrium patens (Spreading-leaved earth moss).